Consider the following 387-residue polypeptide: Fructose-1,6-bisphosphate aldolase/phosphatase (387 aa).

Asp13 acts as the Proton acceptor; for FBP phosphatase activity in catalysis. Asp13, His20, Asp54, and Asp55 together coordinate Mg(2+). Beta-D-fructose 1,6-bisphosphate is bound at residue His20. His20 provides a ligand contact to dihydroxyacetone phosphate. Tyr92 contributes to the beta-D-fructose 1,6-bisphosphate binding site. Gln96 provides a ligand contact to Mg(2+). 105–106 (GN) is a beta-D-fructose 1,6-bisphosphate binding site. Asp133 contacts Mg(2+). Lys134 lines the beta-D-fructose 1,6-bisphosphate pocket. Lys134 lines the dihydroxyacetone phosphate pocket. Residue Tyr229 is the Proton donor/acceptor; for FBP aldolase activity of the active site. The Mg(2+) site is built by Lys232, Asp233, and Asp234. Lys232 serves as the catalytic Schiff-base intermediate with DHAP; for FBP aldolase activity. Residues 242-243 (QS), Arg266, Asp287, and Tyr348 each bind beta-D-fructose 1,6-bisphosphate. Dihydroxyacetone phosphate-binding residues include Arg266 and Asp287.

This sequence belongs to the FBP aldolase/phosphatase family. As to quaternary structure, homooctamer; dimer of tetramers. Requires Mg(2+) as cofactor.

The enzyme catalyses beta-D-fructose 1,6-bisphosphate + H2O = beta-D-fructose 6-phosphate + phosphate. It carries out the reaction beta-D-fructose 1,6-bisphosphate = D-glyceraldehyde 3-phosphate + dihydroxyacetone phosphate. Its pathway is carbohydrate biosynthesis; gluconeogenesis. Its function is as follows. Catalyzes two subsequent steps in gluconeogenesis: the aldol condensation of dihydroxyacetone phosphate (DHAP) and glyceraldehyde-3-phosphate (GA3P) to fructose-1,6-bisphosphate (FBP), and the dephosphorylation of FBP to fructose-6-phosphate (F6P). The chain is Fructose-1,6-bisphosphate aldolase/phosphatase from Ignicoccus hospitalis (strain KIN4/I / DSM 18386 / JCM 14125).